The following is a 728-amino-acid chain: Catalase B (728 aa).

Residues 1–15 form the signal peptide; the sequence is MRLTFIPSLIGVANA. Residues 16 to 27 constitute a propeptide that is removed on maturation; the sequence is VCPYMTGELNRR. His102 is a catalytic residue. N-linked (GlcNAc...) asparagine glycosylation occurs at Asn120. Asn175 is a catalytic residue. Tyr389 serves as a coordination point for heme. N-linked (GlcNAc...) asparagine glycosylation is found at Asn448 and Asn551.

The protein belongs to the catalase family. Homotetramer. It depends on heme as a cofactor. In terms of processing, N-glycosylated.

The protein localises to the secreted. It catalyses the reaction 2 H2O2 = O2 + 2 H2O. Its function is as follows. Occurs in almost all aerobically respiring organisms and serves to protect cells from the toxic effects of hydrogen peroxide. This chain is Catalase B (catB), found in Aspergillus fumigatus (strain ATCC MYA-4609 / CBS 101355 / FGSC A1100 / Af293) (Neosartorya fumigata).